We begin with the raw amino-acid sequence, 159 residues long: Large ribosomal subunit protein mL43 (159 aa).

The interval 123–159 (SPSIQGQWHPFTNKPTALGGLRPREVQNPAPTQRPAQ) is disordered.

Belongs to the mitochondrion-specific ribosomal protein mL43 family. Component of the mitochondrial ribosome large subunit (39S) which comprises a 16S rRNA and about 50 distinct proteins.

It localises to the mitochondrion. The chain is Large ribosomal subunit protein mL43 (MRPL43) from Bos taurus (Bovine).